A 478-amino-acid chain; its full sequence is MLO-like protein 13 (478 aa).

The Extracellular portion of the chain corresponds to 1-10 (MAEARSGSLE). A helical transmembrane segment spans residues 11 to 31 (YTPTWVVAFICFIIVLLSLLA). The Cytoplasmic segment spans residues 32–60 (ERGLHHLGKCLKRRQQDALFEALQKLKEE). A helical transmembrane segment spans residues 61-81 (LMLLGFISLMLTVSQAAIRHI). The Extracellular portion of the chain corresponds to 82–145 (CVPPALVNNM…VSVEALHQLH (64 aa)). The chain crosses the membrane as a helical span at residues 146–166 (IFIFVLAVFHVIFCASTMVLG). Over 167 to 276 (GARIQQWKHW…LRTLEIDFKK (110 aa)) the chain is Cytoplasmic. 2 helical membrane passes run 277 to 297 (VVSI…LNVG) and 298 to 318 (GWNT…MVGA). Over 319–360 (KLEYIISSLALDVSEKRSRAEEAVITPSDELFWFHRPGIVLQ) the chain is Cytoplasmic. A helical transmembrane segment spans residues 361-381 (LIHFILFQNSFEIAFFFWILF). Topologically, residues 382-400 (TYGIHSCIMEKLGYLIPRL) are extracellular. Residues 401–421 (VMGVLVQVLCSYSTLPLYALV) form a helical membrane-spanning segment. Residues 422 to 478 (TQMGSKFKKGIFDNVVQSTLEGWLEDTRNRGESTSEAHRIEMQPTTPESYNVQSENP) lie on the Cytoplasmic side of the membrane. Positions 435–456 (NVVQSTLEGWLEDTRNRGESTS) are calmodulin-binding. Basic and acidic residues predominate over residues 449–462 (RNRGESTSEAHRIE). The interval 449–478 (RNRGESTSEAHRIEMQPTTPESYNVQSENP) is disordered. Residues 464 to 478 (QPTTPESYNVQSENP) are compositionally biased toward polar residues.

Belongs to the MLO family.

The protein localises to the membrane. In terms of biological role, may be involved in modulation of pathogen defense and leaf cell death. Activity seems to be regulated by Ca(2+)-dependent calmodulin binding and seems not to require heterotrimeric G proteins. This is MLO-like protein 13 (MLO13) from Arabidopsis thaliana (Mouse-ear cress).